The chain runs to 217 residues: ATP phosphoribosyltransferase (217 aa).

Belongs to the ATP phosphoribosyltransferase family. Short subfamily. Heteromultimer composed of HisG and HisZ subunits.

The protein localises to the cytoplasm. The enzyme catalyses 1-(5-phospho-beta-D-ribosyl)-ATP + diphosphate = 5-phospho-alpha-D-ribose 1-diphosphate + ATP. It participates in amino-acid biosynthesis; L-histidine biosynthesis; L-histidine from 5-phospho-alpha-D-ribose 1-diphosphate: step 1/9. Catalyzes the condensation of ATP and 5-phosphoribose 1-diphosphate to form N'-(5'-phosphoribosyl)-ATP (PR-ATP). Has a crucial role in the pathway because the rate of histidine biosynthesis seems to be controlled primarily by regulation of HisG enzymatic activity. This is ATP phosphoribosyltransferase from Parasynechococcus marenigrum (strain WH8102).